The chain runs to 207 residues: Large ribosomal subunit protein uL4 (207 aa).

The segment at 56–76 (EVRGGGRKPWRQKGTGRARAG) is disordered. Over residues 60–71 (GGRKPWRQKGTG) the composition is skewed to basic residues.

This sequence belongs to the universal ribosomal protein uL4 family. In terms of assembly, part of the 50S ribosomal subunit.

Functionally, one of the primary rRNA binding proteins, this protein initially binds near the 5'-end of the 23S rRNA. It is important during the early stages of 50S assembly. It makes multiple contacts with different domains of the 23S rRNA in the assembled 50S subunit and ribosome. Its function is as follows. Forms part of the polypeptide exit tunnel. In Desulfitobacterium hafniense (strain DSM 10664 / DCB-2), this protein is Large ribosomal subunit protein uL4.